A 99-amino-acid chain; its full sequence is Large ribosomal subunit protein eL21 (99 aa).

The segment covering 1 to 18 (MVKHSRGNRTRSRKLLKK) has biased composition (basic residues). The interval 1–26 (MVKHSRGNRTRSRKLLKKSPRERGAV) is disordered.

The protein belongs to the eukaryotic ribosomal protein eL21 family.

In Metallosphaera sedula (strain ATCC 51363 / DSM 5348 / JCM 9185 / NBRC 15509 / TH2), this protein is Large ribosomal subunit protein eL21.